Here is an 801-residue protein sequence, read N- to C-terminus: Elongation factor G, mitochondrial (801 aa).

Residues 1-65 (MRVQSLLRAQ…QKIQNQRRWQ (65 aa)) constitute a mitochondrion transit peptide. Positions 100–387 (SRVRNIGIAA…AVCDYLPNPS (288 aa)) constitute a tr-type G domain. Residues 109 to 116 (AHIDSGKT), 185 to 189 (DTPGH), and 239 to 242 (NKMD) contribute to the GTP site.

It belongs to the TRAFAC class translation factor GTPase superfamily. Classic translation factor GTPase family. EF-G/EF-2 subfamily.

It is found in the mitochondrion. Its pathway is protein biosynthesis; polypeptide chain elongation. Mitochondrial GTPase that catalyzes the GTP-dependent ribosomal translocation step during translation elongation. During this step, the ribosome changes from the pre-translocational (PRE) to the post-translocational (POST) state as the newly formed A-site-bound peptidyl-tRNA and P-site-bound deacylated tRNA move to the P and E sites, respectively. Catalyzes the coordinated movement of the two tRNA molecules, the mRNA and conformational changes in the ribosome. The polypeptide is Elongation factor G, mitochondrial (mef1) (Pyrenophora tritici-repentis (strain Pt-1C-BFP) (Wheat tan spot fungus)).